A 375-amino-acid polypeptide reads, in one-letter code: Glutamate 5-kinase (375 aa).

Residue K17 coordinates ATP. Residues S57, D144, and N156 each contribute to the substrate site. ATP is bound at residue 176 to 177 (TD). The PUA domain occupies 283 to 361 (KGELILDTGA…DEIEGILGYV (79 aa)).

It belongs to the glutamate 5-kinase family.

Its subcellular location is the cytoplasm. It carries out the reaction L-glutamate + ATP = L-glutamyl 5-phosphate + ADP. The protein operates within amino-acid biosynthesis; L-proline biosynthesis; L-glutamate 5-semialdehyde from L-glutamate: step 1/2. Functionally, catalyzes the transfer of a phosphate group to glutamate to form L-glutamate 5-phosphate. This chain is Glutamate 5-kinase, found in Thioalkalivibrio sulfidiphilus (strain HL-EbGR7).